A 569-amino-acid chain; its full sequence is Proline--tRNA ligase (569 aa).

The protein belongs to the class-II aminoacyl-tRNA synthetase family. ProS type 1 subfamily. As to quaternary structure, homodimer.

The protein resides in the cytoplasm. The enzyme catalyses tRNA(Pro) + L-proline + ATP = L-prolyl-tRNA(Pro) + AMP + diphosphate. Its function is as follows. Catalyzes the attachment of proline to tRNA(Pro) in a two-step reaction: proline is first activated by ATP to form Pro-AMP and then transferred to the acceptor end of tRNA(Pro). As ProRS can inadvertently accommodate and process non-cognate amino acids such as alanine and cysteine, to avoid such errors it has two additional distinct editing activities against alanine. One activity is designated as 'pretransfer' editing and involves the tRNA(Pro)-independent hydrolysis of activated Ala-AMP. The other activity is designated 'posttransfer' editing and involves deacylation of mischarged Ala-tRNA(Pro). The misacylated Cys-tRNA(Pro) is not edited by ProRS. The sequence is that of Proline--tRNA ligase from Endomicrobium trichonymphae.